An 877-amino-acid polypeptide reads, in one-letter code: DNA polymerase I (877 aa).

A 5'-3' exonuclease domain is found at 177-270 (TPAQFIDLKA…LEDLVYSGPD (94 aa)). One can recognise a 3'-5' exonuclease domain in the interval 302 to 465 (DFTIVDQISQ…TEPILLEKLS (164 aa)).

Belongs to the DNA polymerase type-A family. Single-chain monomer with multiple functions.

The enzyme catalyses DNA(n) + a 2'-deoxyribonucleoside 5'-triphosphate = DNA(n+1) + diphosphate. In addition to polymerase activity, this DNA polymerase exhibits 3'-5' and 5'-3' exonuclease activity. The sequence is that of DNA polymerase I (polA) from Streptococcus pneumoniae (strain ATCC BAA-255 / R6).